Here is a 398-residue protein sequence, read N- to C-terminus: Phosphoglycerate kinase (398 aa).

Residues 23–25 (DFN), R38, 61–64 (HLGK), R122, and R155 each bind substrate. Residues K206, G297, E328, and 354–357 (GGDS) contribute to the ATP site.

Belongs to the phosphoglycerate kinase family. As to quaternary structure, monomer.

It localises to the cytoplasm. It carries out the reaction (2R)-3-phosphoglycerate + ATP = (2R)-3-phospho-glyceroyl phosphate + ADP. It participates in carbohydrate degradation; glycolysis; pyruvate from D-glyceraldehyde 3-phosphate: step 2/5. The sequence is that of Phosphoglycerate kinase from Clostridium novyi (strain NT).